A 539-amino-acid chain; its full sequence is MATSAPLRSLEEEVTCSICLDYLRDPVTIDCGHVFCRSCTTDVRPISGSRPVCPLCKKPFKKENIRPVWQLASLVENIERLKVDKGRQPGEVTREQQDAKLCERHREKLHYYCEDDGKLLCVMCRESREHRPHTAVLMEKAAQPHREKILNHLSTLRRDRDKIQGFQAKGEADILAALKKLQDQRQYIVAEFEQGHQFLREREEHLLEQLAKLEQELTEGREKFKSRGVGELARLALVISELEGKAQQPAAELMQDTRDFLNRYPRKKFWVGKPIARVVKKKTGEFSDKLLSLQRGLREFQGKLLRDLEYKTVSVTLDPQSASGYLQLSEDWKCVTYTSLYKSAYLHPQQFDCEPGVLGSKGFTWGKVYWEVEVEREGWSEDEEEGDEEEEGEEEEEEEEAGYGDGYDDWETDEDEESLGDEEEEEEEEEEEVLESCMVGVARDSVKRKGDLSLRPEDGVWALRLSSSGIWANTSPEAELFPALRPRRVGIALDYEGGTVTFTNAESQELIYTFTATFTRRLVPFLWLKWPGTRLLLRP.

The RING-type zinc finger occupies 16 to 57 (CSICLDYLRDPVTIDCGHVFCRSCTTDVRPISGSRPVCPLCK). A B box-type zinc finger spans residues 97–138 (QDAKLCERHREKLHYYCEDDGKLLCVMCRESREHRPHTAVLM). Zn(2+) is bound by residues C102, H105, C124, and H130. Residues 188–227 (IVAEFEQGHQFLREREEHLLEQLAKLEQELTEGREKFKSR) are a coiled coil. The B30.2/SPRY domain occupies 295–539 (RGLREFQGKL…WPGTRLLLRP (245 aa)). The interval 376–437 (REGWSEDEEE…EEEEEVLESC (62 aa)) is disordered. Over residues 380-434 (SEDEEEGDEEEEGEEEEEEEEAGYGDGYDDWETDEDEESLGDEEEEEEEEEEEVL) the composition is skewed to acidic residues.

The protein belongs to the TRIM/RBCC family. In terms of assembly, interacts with TBK1; this interaction bridges together TBK1 and NEMO in order to activate TBK1. Interacts with INCA1. Post-translationally, autoubiquitinates upon viral infection. In turn, autoubiquitinated TRIM26 recruits NEMO and bridges TBK1-NEMO interaction.

Its subcellular location is the cytoplasm. It localises to the nucleus. It catalyses the reaction S-ubiquitinyl-[E2 ubiquitin-conjugating enzyme]-L-cysteine + [acceptor protein]-L-lysine = [E2 ubiquitin-conjugating enzyme]-L-cysteine + N(6)-ubiquitinyl-[acceptor protein]-L-lysine.. E3 ubiquitin-protein ligase which regulates the IFN-beta production and antiviral response downstream of various DNA-encoded pattern-recognition receptors (PRRs). Also plays a central role in determining the response to different forms of oxidative stress by controlling levels of DNA glycosylases NEIL1, NEIL3 and NTH1 that are involved in repair of damaged DNA. Promotes nuclear IRF3 ubiquitination and proteasomal degradation. Bridges together TBK1 and NEMO during the innate response to viral infection leading to the activation of TBK1. Positively regulates LPS-mediated inflammatory innate immune response by catalyzing the 'Lys-11'-linked polyubiquitination of TAB1 to enhance its activation and subsequent NF-kappa-B and MAPK signaling. In a manner independent of its catalytic activity, inhibits WWP2, a SOX2-directed E3 ubiquitin ligase, and thus protects SOX2 from polyubiquitination and proteasomal degradation. Ubiquitinates the histone acetyltransferase protein complex component PHF20 and thereby triggers its degradation in the nucleus after its recruitment by the histone demethylase KDM6B, serving as a scaffold protein. Upon induction by TGF-beta, ubiquitinates the TFIID component TAF7 for proteasomal degradation. Induces ferroptosis by ubiquitinating SLC7A11, a critical protein for lipid reactive oxygen species (ROS) scavenging. Inhibits directly hepatitis B virus replication by mediating HBX ubiquitination and subsequent degradation. Functionally, (Microbial infection) Promotes herpes simplex virus type 2/HHV-2 infection in vaginal epithelial cells by decreasing the nuclear localization of IRF3, the primary mediator of type I interferon activation. This is Tripartite motif-containing protein 26 (TRIM26) from Homo sapiens (Human).